Consider the following 878-residue polypeptide: MAEIDARLREEVHLLGELLGQTIRTQLGDDFLDKIERIRKGAKAGRRGSAAGAEQLTSTLGDLGDDELLPVARAFNQFLNLANIAEQQHRVRRRRPDEPEPFELRVLDELLERLLAAGQKPDELARQLGRLDIELVLTAHPTEVARRTLIQKYDAIAAQLTALDHSDLLPAERERIAQRLQRLIAEAWHTEEIRRSRPSPVDEAKWGFAVIEHSLWQAVPQFLRRADRSLQAATGLRLPLEAAPIRFASWMGGDRDGNPNVTARVTREVLLLARWMAADLYLRDVDQLAAELSMQQASAELRAQVGDSAEPYRALLKQLRERLRETRSWAQQALTADIAPGAAVLQDNHDLLAPLQLCYQSLHACGMGVIADGPLLDCLRRAATFGLFLVRLDVRQDSTRHAAALSEITDYLGLGRYAEWDEEQRLAFLQRELDSRRPLLPSDYRPSADTAEVLATCREVAAAPAAALGSYVISMAGAASDVLAVQLLLKEAGLRRPMRVVPLFETLADLDNAGPVIDRLLGLPGYRVRLHGPQEVMIGYSDSAKDAGTTAAAWAQYRAQEELVRLCGEHQVELLLFHGRGGTVGRGGGPAHAAILSQPPGSVAGRFRTTEQGEMIRFKFGLPDIAEQNLNLYLAAVLEATLLPPPAPEPSWRAMMDRLADVGVKAYRGVVREHPQFVAYFRQATPEQELGRLPLGSRPAKRREGGVESLRAIPWIFAWTQTRLMLPAWLGWEQALGQALAGGEGELLKNMREQWPFFRTRIDMLEMVLAKADASIAALYDQRLVEPALQPLGAQLRDLLSQACAAVLELTGQSRLLAHSPETLESISVRNTYLDPLHLLQAELLARCRLRQQAPESPLEQALLVSVAGIAAGLRNTG.

Active-site residues include His-140 and Lys-545.

The protein belongs to the PEPCase type 1 family. It depends on Mg(2+) as a cofactor.

It carries out the reaction oxaloacetate + phosphate = phosphoenolpyruvate + hydrogencarbonate. In terms of biological role, forms oxaloacetate, a four-carbon dicarboxylic acid source for the tricarboxylic acid cycle. The polypeptide is Phosphoenolpyruvate carboxylase (Ectopseudomonas mendocina (strain ymp) (Pseudomonas mendocina)).